We begin with the raw amino-acid sequence, 309 residues long: UDP-N-acetylenolpyruvoylglucosamine reductase (309 aa).

The 165-residue stretch at 40–204 folds into the FAD-binding PCMH-type domain; the sequence is LGGKVPLFAI…LQATFKLKKG (165 aa). The active site involves Arg182. Ser233 serves as the catalytic Proton donor. Residue Glu304 is part of the active site.

The protein belongs to the MurB family. The cofactor is FAD.

It is found in the cytoplasm. The catalysed reaction is UDP-N-acetyl-alpha-D-muramate + NADP(+) = UDP-N-acetyl-3-O-(1-carboxyvinyl)-alpha-D-glucosamine + NADPH + H(+). It functions in the pathway cell wall biogenesis; peptidoglycan biosynthesis. Cell wall formation. This Fervidobacterium nodosum (strain ATCC 35602 / DSM 5306 / Rt17-B1) protein is UDP-N-acetylenolpyruvoylglucosamine reductase.